The sequence spans 239 residues: 4-hydroxy-tetrahydrodipicolinate reductase (239 aa).

NAD(+) is bound by residues 9–14 (GINGKM), 78–80 (GTT), and 104–107 (APNF). His134 serves as the catalytic Proton donor/acceptor. Residue His135 participates in (S)-2,3,4,5-tetrahydrodipicolinate binding. Lys138 serves as the catalytic Proton donor. (S)-2,3,4,5-tetrahydrodipicolinate is bound at residue 144 to 145 (GT).

Belongs to the DapB family.

It localises to the cytoplasm. It catalyses the reaction (S)-2,3,4,5-tetrahydrodipicolinate + NAD(+) + H2O = (2S,4S)-4-hydroxy-2,3,4,5-tetrahydrodipicolinate + NADH + H(+). The catalysed reaction is (S)-2,3,4,5-tetrahydrodipicolinate + NADP(+) + H2O = (2S,4S)-4-hydroxy-2,3,4,5-tetrahydrodipicolinate + NADPH + H(+). The protein operates within amino-acid biosynthesis; L-lysine biosynthesis via DAP pathway; (S)-tetrahydrodipicolinate from L-aspartate: step 4/4. Functionally, catalyzes the conversion of 4-hydroxy-tetrahydrodipicolinate (HTPA) to tetrahydrodipicolinate. The sequence is that of 4-hydroxy-tetrahydrodipicolinate reductase from Coxiella burnetii (strain Dugway 5J108-111).